Reading from the N-terminus, the 501-residue chain is MTEASEINLSDIKGPIDVNTPITNHRTALIQNYSTKPKLTYQTVFGVNGPLVIVHNVKFPMFNEIVKITLPNGQIRMGQVLESSKNKAVVQVFEGTTGVDAKFTTCEFTGDIFRSPVSLDMLGRIFNGSGKPIDKGPPVLPEDYLDINGQPINPFNRIYPEEMIQTGISAIDVMNSIARGQKIPIFSAAGLPHNEIAAQIVRQGGLVQLPGRNNETVNFAIVFAAMGVNMETARFFKQDFEECGSMDNVCLFLNLANDPTIERIITPRIALTAAEFFAYHCGKHVLVVLTDMSSYAEALREISAAREEVPGRRGFPGYMYTDLATIYERAGRVKGREGSITQIPILTMPNNDITHPIPDLTGYITEGQIYIDKQLHKRLIYPPIDVLPSLSRLMKSAVGEGMTREDHSDLSNQLYACYAMGKDVQAMKAVVGVEALSPDDLLYLEFLAKFEKNFIAQGRYENRTIVESLNIGWELLRIFPREMLKRIPETLLEKYYKRKKQ.

Arg392 provides a ligand contact to ATP.

The protein belongs to the ATPase alpha/beta chains family. V-ATPase is a heteromultimeric enzyme made up of two complexes: the ATP-hydrolytic V1 complex and the proton translocation V0 complex. The V1 complex consists of three catalytic AB heterodimers that form a heterohexamer, three peripheral stalks each consisting of EG heterodimers, one central rotor including subunits D and F, and the regulatory subunits C and H. The proton translocation complex V0 consists of the proton transport subunit a, a ring of proteolipid subunits c9c'', rotary subunit d, subunits e and f, and the accessory subunits vah-19/Ac45 and vah-20/PRR. Predominantly expressed in male and hermaphrodite testis (at protein level).

It is found in the cytoplasm. Its function is as follows. Non-catalytic subunit of the V1 complex of vacuolar(H+)-ATPase (V-ATPase), a multisubunit enzyme composed of a peripheral complex (V1) that hydrolyzes ATP and a membrane integral complex (V0) that translocates protons. V-ATPase is responsible for acidifying and maintaining the pH of intracellular compartments and in some cell types, is targeted to the plasma membrane, where it is responsible for acidifying the extracellular environment. In neurons, required for necrotic cell death probably by promoting intracellular acidification. Required for spermatogenesis where it regulates the fibrous body-membranous organelle (FBMO) morphology in spermatocytes and the acidification of FBMO-derived secretory membranous organelles (MOs) as spermatids mature. This is V-type proton ATPase subunit B 2 from Caenorhabditis elegans.